We begin with the raw amino-acid sequence, 465 residues long: Sorting nexin-8 (465 aa).

Residues 1 to 19 (MTGRAMDPLPAAAVGAAAE) show a composition bias toward low complexity. Positions 1–36 (MTGRAMDPLPAAAVGAAAEAEADEEADPPASDLPTP) are disordered. The region spanning 73 to 181 (ARDTVQVELI…KLFLSFSGSD (109 aa)) is the PX domain. A 1,2-diacyl-sn-glycero-3-phospho-(1D-myo-inositol-3-phosphate) contacts are provided by Arg-109, Lys-135, and Arg-148. Position 452 is a phosphothreonine (Thr-452). Ser-456 bears the Phosphoserine mark.

The protein belongs to the sorting nexin family.

The protein localises to the early endosome membrane. Its function is as follows. May be involved in several stages of intracellular trafficking. May play a role in intracellular protein transport from early endosomes to the trans-Golgi network. This is Sorting nexin-8 (SNX8) from Homo sapiens (Human).